The sequence spans 125 residues: MAGPSLACCLLGLLALTSACYIQNCPLGGKRAAPDLDVRKCLPCGPGGKGRCFGPNICCAEELGCFVGTAEALRCQEENYLPSPCQSGQKACGSGGRCAVLGLCCSPDGCHADPACDAEATFSQR.

Positions Met1–Ala19 are cleaved as a signal peptide. An intrachain disulfide couples Cys20 to Cys25. A Glycine amide modification is found at Gly28. Intrachain disulfides connect Cys41–Cys85, Cys44–Cys58, Cys52–Cys75, Cys59–Cys65, Cys92–Cys104, Cys98–Cys116, and Cys105–Cys110.

Belongs to the vasopressin/oxytocin family. Interacts with oxytocin receptor (Ki=1.5 nM). Interacts with vasopressin V1aR/AVPR1A (Ki=37 nM), V1bR/AVPR1B (Ki=222 nM) and V2R/AVPR2 receptors (Ki=823 nM).

It is found in the secreted. In terms of biological role, neurophysin 1 specifically binds oxytocin. Functionally, oxytocin causes contraction of the smooth muscle of the uterus and of the mammary gland. Acts by binding to oxytocin receptor (OXTR). This is Oxytocin-neurophysin 1 (OXT) from Homo sapiens (Human).